We begin with the raw amino-acid sequence, 318 residues long: DNA-directed RNA polymerase subunit alpha (318 aa).

Residues 1-232 are alpha N-terminal domain (alpha-NTD); sequence MAHQRIVGPT…NLFSPLQNVR (232 aa). The tract at residues 246–318 is alpha C-terminal domain (alpha-CTD); that stretch reads KMTEVLVEEL…HLPKEKFTKD (73 aa).

Belongs to the RNA polymerase alpha chain family. As to quaternary structure, in plastids the minimal PEP RNA polymerase catalytic core is composed of four subunits: alpha, beta, beta', and beta''. When a (nuclear-encoded) sigma factor is associated with the core the holoenzyme is formed, which can initiate transcription.

The protein localises to the plastid. It is found in the chloroplast. It catalyses the reaction RNA(n) + a ribonucleoside 5'-triphosphate = RNA(n+1) + diphosphate. Functionally, DNA-dependent RNA polymerase catalyzes the transcription of DNA into RNA using the four ribonucleoside triphosphates as substrates. In Chlorokybus atmophyticus (Soil alga), this protein is DNA-directed RNA polymerase subunit alpha.